A 205-amino-acid chain; its full sequence is Holliday junction branch migration complex subunit RuvA (205 aa).

Residues Met-1–Lys-62 are domain I. The interval Thr-63–Leu-141 is domain II. Positions Phe-142–Lys-152 are flexible linker. The domain III stretch occupies residues Gly-153–Arg-205.

It belongs to the RuvA family. As to quaternary structure, homotetramer. Forms an RuvA(8)-RuvB(12)-Holliday junction (HJ) complex. HJ DNA is sandwiched between 2 RuvA tetramers; dsDNA enters through RuvA and exits via RuvB. An RuvB hexamer assembles on each DNA strand where it exits the tetramer. Each RuvB hexamer is contacted by two RuvA subunits (via domain III) on 2 adjacent RuvB subunits; this complex drives branch migration. In the full resolvosome a probable DNA-RuvA(4)-RuvB(12)-RuvC(2) complex forms which resolves the HJ.

Its subcellular location is the cytoplasm. Functionally, the RuvA-RuvB-RuvC complex processes Holliday junction (HJ) DNA during genetic recombination and DNA repair, while the RuvA-RuvB complex plays an important role in the rescue of blocked DNA replication forks via replication fork reversal (RFR). RuvA specifically binds to HJ cruciform DNA, conferring on it an open structure. The RuvB hexamer acts as an ATP-dependent pump, pulling dsDNA into and through the RuvAB complex. HJ branch migration allows RuvC to scan DNA until it finds its consensus sequence, where it cleaves and resolves the cruciform DNA. This chain is Holliday junction branch migration complex subunit RuvA, found in Bacillus cereus (strain G9842).